A 241-amino-acid polypeptide reads, in one-letter code: MEKFAPEFHGEDANTKATKFLESLKGKFTSSKDSRKKDSIISVNSIDIELPKESPITSTNHNINQPSEINDTIAANQVHIRKPLVSFKEELPSSENPFTKLYKETIETFDNNEEESSYSYDEINDQTNDNITARLDRIDEKLSEIIGMLHTLVVASAGPTAARDGIRDAMVGLREEMIEKIRSEALMTNDRLEAMARLRDEESEKMTKDTSDEVKLTPTSEKLNMVLEDESSDNDLSLEDF.

Residues 1–30 form a binding to monomeric RNA-free nucleoprotein region; the sequence is MEKFAPEFHGEDANTKATKFLESLKGKFTS. The important for viral particle assembly stretch occupies residues 39–57; the sequence is SIISVNSIDIELPKESPIT. A binding to host phosphatase PP1 region spans residues 81–87; it reads RKPLVSF. The binding to protein M2-1 stretch occupies residues 90 to 110; sequence ELPSSENPFTKLYKETIETFD. Thr108 bears the Phosphothreonine; by host mark. 3 positions are modified to phosphoserine; by host: Ser116, Ser117, and Ser119. Residues 120-160 are oligomerization and binding to RNA-directed RNA polymerase L; sequence YDEINDQTNDNITARLDRIDEKLSEIIGMLHTLVVASAGPT. Residues 199–215 are compositionally biased toward basic and acidic residues; it reads RDEESEKMTKDTSDEVK. Residues 199 to 241 are disordered; that stretch reads RDEESEKMTKDTSDEVKLTPTSEKLNMVLEDESSDNDLSLEDF. Residues 216-232 are binding to RNA-directed RNA polymerase L; that stretch reads LTPTSEKLNMVLEDESS. Over residues 227–241 the composition is skewed to acidic residues; that stretch reads LEDESSDNDLSLEDF. Phosphoserine; by host occurs at positions 232 and 237. A binding to the N-RNA complex region spans residues 232-241; that stretch reads SDNDLSLEDF.

This sequence belongs to the pneumoviridae phosphoprotein P family. As to quaternary structure, homotetramer. Interacts with protein M2-1; the interaction between the two tetramers is required for the anti-termination and elongation transcriptional activities of protein M2-1. Interacts with host phosphatase PP1; this interaction recruits PP1 to the inclusion bodies. Formation of a complex PP1/M2-1/P allows P to target host PP1 phosphatase to the M2-1 substrate. Interacts (via C-terminus) with the nucleoprotein N (via N-terminus); the phosphorylated phosphoprotein P binds to N-RNA complex. Interacts (via N-terminus) with the monomeric RNA-free nucleoprotein N. Interacts (via C-terminus) with RNA-directed RNA polymerase L; the association of P and L forms the polymerase complex. Post-translationally, constitutively phosphorylated by host. Phosphorylation at S-116, S-117, S-119, S-232 and S-237 is required for transcription inhibition by M2-2 and viral particle egress. Phosphorylation at S-232 and S-237 increases the affinity of the binding to the nucleoprotein.

The protein localises to the virion. Its subcellular location is the host cytoplasm. In terms of biological role, plays critical roles in regulating RNA replication and transcription through its interactions with multiple proteins. Tethers the RNA-directed RNA polymerase L to the nucleoprotein-RNA complex. Recruits the M2-1 protein, a processivity factor that is required for efficient transcription of viral RNA. Acts as a chaperone for neo-synthesized nucleoprotein by forming an N-P complex that preserves N in a monomeric and RNA-free state and prevents the association of nascent N with host cell RNAs. Recruits the host phosphatase PP1 to inclusion bodies to regulate viral transcription. Together with the nucleoprotein, sequesters host NF-kappa-B in inclusion bodies (IBs) thereby inhibiting this host defense pathway. This is Phosphoprotein (P) from Bovine respiratory syncytial virus (strain A51908) (BRS).